The sequence spans 181 residues: Adenine phosphoribosyltransferase (181 aa).

The protein belongs to the purine/pyrimidine phosphoribosyltransferase family. In terms of assembly, homodimer.

It localises to the cytoplasm. It carries out the reaction AMP + diphosphate = 5-phospho-alpha-D-ribose 1-diphosphate + adenine. The protein operates within purine metabolism; AMP biosynthesis via salvage pathway; AMP from adenine: step 1/1. Catalyzes a salvage reaction resulting in the formation of AMP, that is energically less costly than de novo synthesis. This chain is Adenine phosphoribosyltransferase, found in Rhizobium leguminosarum bv. trifolii (strain WSM2304).